Consider the following 442-residue polypeptide: GPI mannosyltransferase 1 (442 aa).

Transmembrane regions (helical) follow at residues 22-42 (INLT…LIVF), 95-115 (ILIH…IIAY), 177-197 (LASI…IYSI), 242-262 (AFTF…IFLF), 307-327 (MIVA…ITLV), 336-356 (LLLE…QYFI), 361-381 (ILPL…ILFA), and 408-428 (IWVA…KLIL).

Belongs to the PIGM family.

The protein resides in the endoplasmic reticulum membrane. The protein operates within glycolipid biosynthesis; glycosylphosphatidylinositol-anchor biosynthesis. In terms of biological role, mannosyltransferase involved in glycosylphosphatidylinositol-anchor biosynthesis. Transfers the first alpha-1,4-mannose to GlcN-acyl-PI during GPI precursor assembly. This is GPI mannosyltransferase 1 (pigm) from Dictyostelium discoideum (Social amoeba).